The primary structure comprises 325 residues: Structure-specific endonuclease subunit SLX1 (325 aa).

Positions 10–92 constitute a GIY-YIG domain; it reads ALYTVYILRS…NNPHLSMHIP (83 aa). The SLX1-type zinc finger occupies 230–284; it reads CVVCREEMKSGEGLHAVCTHEGCDGVGHISCWSRSFLKNNDTGSILPVQGQCPMC.

It belongs to the SLX1 family. As to quaternary structure, forms a heterodimer with SLX4. A divalent metal cation is required as a cofactor.

It is found in the nucleus. In terms of biological role, catalytic subunit of the SLX1-SLX4 structure-specific endonuclease that resolves DNA secondary structures generated during DNA repair and recombination. Has endonuclease activity towards branched DNA substrates, introducing single-strand cuts in duplex DNA close to junctions with ss-DNA. In Chaetomium globosum (strain ATCC 6205 / CBS 148.51 / DSM 1962 / NBRC 6347 / NRRL 1970) (Soil fungus), this protein is Structure-specific endonuclease subunit SLX1.